Reading from the N-terminus, the 302-residue chain is RING-H2 finger protein ATL38 (302 aa).

A helical membrane pass occupies residues 15-35; the sequence is LLVITIILFAIFIVGLASVCF. The RING-type; atypical zinc-finger motif lies at 96–138; that stretch reads CAVCICEFEDHETLRLMPECCHVFHADCVSVWLSDHSTCPLCR. A disordered region spans residues 279-302; it reads GEAVAPSKDSRRISVEQSQLDDRV. Basic and acidic residues predominate over residues 286–302; the sequence is KDSRRISVEQSQLDDRV.

This sequence belongs to the RING-type zinc finger family. ATL subfamily.

The protein resides in the membrane. The catalysed reaction is S-ubiquitinyl-[E2 ubiquitin-conjugating enzyme]-L-cysteine + [acceptor protein]-L-lysine = [E2 ubiquitin-conjugating enzyme]-L-cysteine + N(6)-ubiquitinyl-[acceptor protein]-L-lysine.. It functions in the pathway protein modification; protein ubiquitination. In Arabidopsis thaliana (Mouse-ear cress), this protein is RING-H2 finger protein ATL38 (ATL38).